Reading from the N-terminus, the 487-residue chain is Phosphatidylserine synthase 2 (487 aa).

Basic and acidic residues predominate over residues 1 to 10; sequence MRRGERRDAG. The tract at residues 1 to 50 is disordered; the sequence is MRRGERRDAGGPRPESPVPAGRASLEEPPDGPSAGQATGPGEGRRSTESE. The Cytoplasmic portion of the chain corresponds to 1–62; the sequence is MRRGERRDAG…DDGTNTFFWR (62 aa). S16 and S24 each carry phosphoserine. The chain crosses the membrane as a helical span at residues 63–83; that stretch reads AHTLTVLFILTCTLGYVTLLE. The Lumenal segment spans residues 84–96; the sequence is ETPQDTAYNTKRG. A helical membrane pass occupies residues 97 to 117; that stretch reads IVASILVFLCFGVTQAKDGPF. The Cytoplasmic segment spans residues 118-126; that stretch reads SRPHPAYWR. Residues 127–147 traverse the membrane as a helical segment; that stretch reads FWLCVSVVYELFLIFILFQTV. At 148 to 313 the chain is on the lumenal side; that stretch reads QDGRQFLKYV…EWKPASSLRR (166 aa). Residue N181 is glycosylated (N-linked (GlcNAc...) asparagine). Residues 314-334 form a helical membrane-spanning segment; sequence WLAVCGIILVFLLAELNTFYL. Position 335 (K335) is a topological domain, cytoplasmic. A helical membrane pass occupies residues 336–356; sequence FVLWMPPEHYLVLLRLVFFVN. Residues 357-376 are Lumenal-facing; the sequence is VGGVAMREIYDFMDDPKPHK. The chain crosses the membrane as a helical span at residues 377–397; that stretch reads KLGPQAWLVAAITATELLIVV. Residues 398–403 are Cytoplasmic-facing; that stretch reads KYDPHT. Residues 404–424 form a helical membrane-spanning segment; that stretch reads LTLSLPFYISQCWTLGSVLAL. The Lumenal portion of the chain corresponds to 425–487; it reads TWTVWRFFLR…AEGEGAPTPN (63 aa). Residues 451 to 487 form a disordered region; that stretch reads KDDQGSTVGNGDQHPLGLDEDLLGPGVAEGEGAPTPN. Position 485 is a phosphothreonine (T485).

It belongs to the phosphatidyl serine synthase family.

Its subcellular location is the endoplasmic reticulum membrane. It carries out the reaction a 1,2-diacyl-sn-glycero-3-phosphoethanolamine + L-serine = a 1,2-diacyl-sn-glycero-3-phospho-L-serine + ethanolamine. It catalyses the reaction 1-hexadecanoyl-2-(9Z-octadecenoyl)-sn-glycero-3-phosphoethanolamine + L-serine = 1-hexadecanoyl-2-(9Z-octadecenoyl)-sn-glycero-3-phospho-L-serine + ethanolamine. The catalysed reaction is 1-hexadecanoyl-2-(4Z,7Z,10Z,13Z,16Z,19Z-docosahexaenoyl)-sn-glycero-3-phosphoethanolamine + L-serine = 1-hexadecanoyl-2-(4Z,7Z,10Z,13Z,16Z,19Z-docosahexaenoyl)-sn-glycero-3-phosphoserine + ethanolamine. The enzyme catalyses 1-octadecanoyl-2-(5Z,8Z,11Z,14Z)-eicosatetraenoyl-sn-glycero-3-phosphoethanolamine + L-serine = 1-octadecanoyl-2-(5Z,8Z,11Z,14Z)-eicosatetraenoyl-sn-glycero-3-phosphoserine + ethanolamine. It carries out the reaction 1-octadecanoyl-2-(4Z,7Z,10Z,13Z,16Z,19Z-docosahexaenoyl)-sn-glycero-3-phosphoethanolamine + L-serine = 1-octadecanoyl-2-(4Z,7Z,10Z,13Z,16Z,19Z-docosahexaenoyl)-sn-glycero-3-phosphoserine + ethanolamine. It catalyses the reaction 1-(1Z-octadecenyl)-2-(4Z,7Z,10Z,13Z,16Z,19Z-docosahexaenoyl)-sn-glycero-3-phosphoethanolamine + L-serine = 1-(1Z-octadecenyl)-2-(4Z,7Z,10Z,13Z,16Z,19Z-docosahexaenoyl)-sn-glycero-3-phospho-L-serine + ethanolamine. The catalysed reaction is 1-octadecanoyl-2-(9Z-octadecenoyl)-sn-glycero-3-phosphoethanolamine + L-serine = 1-octadecanoyl-2-(9Z-octadecenoyl)-sn-glycero-3-phospho-L-serine + ethanolamine. The enzyme catalyses 1-(1Z-octadecenyl)-2-(9Z-octadecenoyl)-sn-glycero-3-phosphoethanolamine + L-serine = 1-(1Z-octadecenyl)-2-(9Z-octadecenoyl)-sn-glycero-3-phospho-L-serine + ethanolamine. It carries out the reaction 1-(1Z-octadecenyl)-2-(5Z,8Z,11Z,14Z- eicosatetraenoyl)-sn-glycero-3-phosphoethanolamine + L-serine = 1-(1Z-octadecenyl)-2-(5Z,8Z,11Z,14Z-eicosatetraenoyl)-sn-glycero-3-phospho-L-serine + ethanolamine. Its pathway is phospholipid metabolism; phosphatidylserine biosynthesis. With respect to regulation, requires calcium ions. Inhibited by exogenous phosphatidylserine. Functionally, catalyzes a base-exchange reaction in which the polar head group of phosphatidylethanolamine (PE) or phosphatidylcholine (PC) is replaced by L-serine. Catalyzes the conversion of phosphatatidylethanolamine and does not act on phosphatidylcholine. Can utilize both phosphatidylethanolamine (PE) plasmalogen and diacyl PE as substrate and the latter is six times better utilized, indicating the importance of an ester linkage at the sn-1 position. Although it shows no sn-1 fatty acyl preference, exhibits significant preference towards docosahexaenoic acid (22:6n-3) compared with 18:1 or 20:4 at the sn-2 position. In Homo sapiens (Human), this protein is Phosphatidylserine synthase 2 (PTDSS2).